Reading from the N-terminus, the 447-residue chain is UDP-N-acetylglucosamine 1-carboxyvinyltransferase (447 aa).

Position 27–28 (27–28) interacts with phosphoenolpyruvate; sequence KN. Arg-97 contributes to the UDP-N-acetyl-alpha-D-glucosamine binding site. Cys-121 functions as the Proton donor in the catalytic mechanism. 2-(S-cysteinyl)pyruvic acid O-phosphothioketal is present on Cys-121. UDP-N-acetyl-alpha-D-glucosamine contacts are provided by residues 126 to 130, Asp-314, and Val-336; that span reads RPVDL.

This sequence belongs to the EPSP synthase family. MurA subfamily.

The protein resides in the cytoplasm. The catalysed reaction is phosphoenolpyruvate + UDP-N-acetyl-alpha-D-glucosamine = UDP-N-acetyl-3-O-(1-carboxyvinyl)-alpha-D-glucosamine + phosphate. The protein operates within cell wall biogenesis; peptidoglycan biosynthesis. Cell wall formation. Adds enolpyruvyl to UDP-N-acetylglucosamine. The polypeptide is UDP-N-acetylglucosamine 1-carboxyvinyltransferase (Nostoc sp. (strain PCC 7120 / SAG 25.82 / UTEX 2576)).